Consider the following 384-residue polypeptide: DNA dC-&gt;dU-editing enzyme APOBEC-3G (384 aa).

The essential for cytoplasmic localization stretch occupies residues 1-60 (MKPHFRNTVERMYRDTFSYNFYNRPILSRRNTVWLCYEVKTKGPSRPPLDAKIFRGQVYS). The CMP/dCMP-type deaminase 1 domain occupies 29–138 (RRNTVWLCYE…PDYQEALRSL (110 aa)). T32 carries the post-translational modification Phosphothreonine; by PKA. Residues K42, K52, and K63 each participate in a (Microbial infection) Glycyl lysine isopeptide (Lys-Gly) (interchain with G-Cter in ubiquitin) cross-link. Zn(2+) contacts are provided by H65, C97, and C100. Residues K150 and K163 each participate in a (Microbial infection) Glycyl lysine isopeptide (Lys-Gly) (interchain with G-Cter in ubiquitin) cross-link. The tract at residues 209 to 336 (EPWVRGRHET…TLAEAGAKIS (128 aa)) is necessary for homooligomerization. Positions 213 to 215 (RGR) are interaction with DNA. In terms of domain architecture, CMP/dCMP-type deaminase 2 spans 214-328 (GRHETYLCYE…GRCQEGLRTL (115 aa)). T218 bears the Phosphothreonine; by PKA and CAMK2 mark. Residue K249 forms a (Microbial infection) Glycyl lysine isopeptide (Lys-Gly) (interchain with G-Cter in ubiquitin) linkage. Position 257 (H257) interacts with Zn(2+). E259 functions as the Proton donor in the catalytic mechanism. A (Microbial infection) Glycyl lysine isopeptide (Lys-Gly) (interchain with G-Cter in ubiquitin) cross-link involves residue K270. Residues C288 and C291 each contribute to the Zn(2+) site. Residues K297, K301, and K303 each participate in a (Microbial infection) Glycyl lysine isopeptide (Lys-Gly) (interchain with G-Cter in ubiquitin) cross-link. The tract at residues 313 to 320 (RIYDDQGR) is interaction with DNA. A (Microbial infection) Glycyl lysine isopeptide (Lys-Gly) (interchain with G-Cter in ubiquitin) cross-link involves residue K334.

It belongs to the cytidine and deoxycytidylate deaminase family. In terms of assembly, homodimer. Homooligomer. Can bind RNA to form ribonucleoprotein complexes of high-molecular-mass (HMM) or low-molecular-mass (LMM). HMM is inactive and heterogeneous in protein composition because of binding nonselectively to cellular RNAs, which in turn are associated with variety of cellular proteins. The LMM form which is enzymatically active has few or no RNAs associated. Its ability to form homooligomer is distinct from its ability to assemble into HMM. Interacts with APOBEC3B, APOBEC3F, MOV10, AGO2, EIF4E, EIF4ENIF1, DCP2 and DDX6 in an RNA-dependent manner. Interacts with AGO1, AGO3 and PKA/PRKACA. As to quaternary structure, (Microbial infection) Interacts with HIV-1 Vif; promoting its ubiquitination by a cullin-5-RING E3 ubiquitin-protein ligase complex (ECS complex) hijacked by the HIV-1 Vif. (Microbial infection) Interacts with HIV-1 reverse transcriptase/ribonuclease H. In terms of assembly, (Microbial infection) Interacts with hepatitis B virus capsid protein. Zn(2+) serves as cofactor. In terms of processing, (Microbial infection) Following infection by HIV-1, ubiquitinated by a cullin-5-RING E3 ubiquitin-protein ligase complex (ECS complex) hijacked by the HIV-1 Vif protein, leading to its degradation. Deubiquitinated by USP49; leading to stabilization. Phosphorylation at Thr-32 reduces its binding to HIV-1 Vif and subsequent ubiquitination and degradation thus promoting its antiviral activity. As to expression, expressed in spleen, testes, ovary and peripheral blood leukocytes and CD4+ lymphocytes. Also expressed in non-permissive peripheral blood mononuclear cells, and several tumor cell lines; no expression detected in permissive lymphoid and non-lymphoid cell lines. Exists only in the LMM form in peripheral blood-derived resting CD4 T-cells and monocytes, both of which are refractory to HIV-1 infection. LMM is converted to a HMM complex when resting CD4 T-cells are activated or when monocytes are induced to differentiate into macrophages. This change correlates with increased susceptibility of these cells to HIV-1 infection.

Its subcellular location is the cytoplasm. The protein localises to the nucleus. It localises to the P-body. It catalyses the reaction a 2'-deoxycytidine in single-stranded DNA + H2O + H(+) = a 2'-deoxyuridine in single-stranded DNA + NH4(+). (Microbial infection) Antiviral activity is neutralized by the HIV-1 virion infectivity factor (Vif), that prevents its incorporation into progeny virions by both inhibiting its translation and/or by inducing its ubiquitination and subsequent degradation by the 26S proteasome. Can also be neutralized by simian immunodeficiency virus sooty mangabey monkey virus (SIV-sm) and chimpanzee immunodeficiency virus (SIV-cpz) Vif. DNA deaminase (cytidine deaminase) which acts as an inhibitor of retrovirus replication and retrotransposon mobility via deaminase-dependent and -independent mechanisms. Exhibits potent antiviral activity against Vif-deficient HIV-1. After the penetration of retroviral nucleocapsids into target cells of infection and the initiation of reverse transcription, it can induce the conversion of cytosine to uracil in the minus-sense single-strand viral DNA, leading to G-to-A hypermutations in the subsequent plus-strand viral DNA. The resultant detrimental levels of mutations in the proviral genome, along with a deamination-independent mechanism that works prior to the proviral integration, together exert efficient antiretroviral effects in infected target cells. Selectively targets single-stranded DNA and does not deaminate double-stranded DNA or single- or double-stranded RNA. Exhibits antiviral activity also against simian immunodeficiency viruses (SIVs), hepatitis B virus (HBV), equine infectious anemia virus (EIAV), xenotropic MuLV-related virus (XMRV) and simian foamy virus (SFV). May inhibit the mobility of LTR and non-LTR retrotransposons. This chain is DNA dC-&gt;dU-editing enzyme APOBEC-3G, found in Homo sapiens (Human).